Here is a 263-residue protein sequence, read N- to C-terminus: UPF0758 protein NGR_c13970 (263 aa).

In terms of domain architecture, MPN spans V141–F263. H212, H214, and D225 together coordinate Zn(2+). Positions H212 to D225 match the JAMM motif motif.

It belongs to the UPF0758 family.

The polypeptide is UPF0758 protein NGR_c13970 (Sinorhizobium fredii (strain NBRC 101917 / NGR234)).